The sequence spans 421 residues: uncharacterized protein (421 aa).

2 coiled-coil regions span residues 126–182 and 328–397; these read YART…IQKI and YQVE…RLTL.

This is an uncharacterized protein from Treponema pallidum (strain Nichols).